Consider the following 145-residue polypeptide: uncharacterized protein (145 aa).

This is an uncharacterized protein from Methanothrix soehngenii (Methanosaeta concilii).